The sequence spans 545 residues: CTP synthase (545 aa).

The interval 1–266 (MTHFIFVTGG…DDLICERFGY (266 aa)) is amidoligase domain. CTP is bound at residue S13. Residue S13 participates in UTP binding. Residues 14-19 (SLGKGI) and D71 each bind ATP. Mg(2+) is bound by residues D71 and E140. Residues 147-149 (DIE), 187-192 (KTKPTQ), and K223 each bind CTP. Residues 187–192 (KTKPTQ) and K223 contribute to the UTP site. 239-241 (KDA) lines the ATP pocket. Residues 292–543 (RVAMVGKYVE…IDAAKKQHLK (252 aa)) form the Glutamine amidotransferase type-1 domain. Position 353 (G353) interacts with L-glutamine. The active-site Nucleophile; for glutamine hydrolysis is C380. L-glutamine is bound by residues 381-384 (LGMQ), E404, and R471. Active-site residues include H516 and E518.

This sequence belongs to the CTP synthase family. Homotetramer.

The enzyme catalyses UTP + L-glutamine + ATP + H2O = CTP + L-glutamate + ADP + phosphate + 2 H(+). The catalysed reaction is L-glutamine + H2O = L-glutamate + NH4(+). It carries out the reaction UTP + NH4(+) + ATP = CTP + ADP + phosphate + 2 H(+). The protein operates within pyrimidine metabolism; CTP biosynthesis via de novo pathway; CTP from UDP: step 2/2. Its activity is regulated as follows. Allosterically activated by GTP, when glutamine is the substrate; GTP has no effect on the reaction when ammonia is the substrate. The allosteric effector GTP functions by stabilizing the protein conformation that binds the tetrahedral intermediate(s) formed during glutamine hydrolysis. Inhibited by the product CTP, via allosteric rather than competitive inhibition. In terms of biological role, catalyzes the ATP-dependent amination of UTP to CTP with either L-glutamine or ammonia as the source of nitrogen. Regulates intracellular CTP levels through interactions with the four ribonucleotide triphosphates. This Acinetobacter baylyi (strain ATCC 33305 / BD413 / ADP1) protein is CTP synthase.